The following is a 368-amino-acid chain: Glutamate 5-kinase 1 (368 aa).

Lys12 lines the ATP pocket. Positions 52, 135, and 147 each coordinate substrate. ATP contacts are provided by residues 167–168 (SD) and 209–215 (TGGMKTK). A PUA domain is found at 274–348 (QGEVVVDGSF…DNEQSEFSEK (75 aa)).

Belongs to the glutamate 5-kinase family.

It localises to the cytoplasm. It catalyses the reaction L-glutamate + ATP = L-glutamyl 5-phosphate + ADP. The protein operates within amino-acid biosynthesis; L-proline biosynthesis; L-glutamate 5-semialdehyde from L-glutamate: step 1/2. In terms of biological role, catalyzes the transfer of a phosphate group to glutamate to form L-glutamate 5-phosphate. This is Glutamate 5-kinase 1 from Pseudoalteromonas translucida (strain TAC 125).